A 435-amino-acid chain; its full sequence is Cyclin-dependent kinase 15 (435 aa).

Residues 103–387 (YLNLEKLGEG…AQEALVHDYF (285 aa)) form the Protein kinase domain. ATP is bound by residues 109 to 117 (LGEGSYATV) and Lys132. Residue Asp224 is the Proton acceptor of the active site.

Belongs to the protein kinase superfamily. CMGC Ser/Thr protein kinase family. CDC2/CDKX subfamily. Mg(2+) serves as cofactor.

The catalysed reaction is L-seryl-[protein] + ATP = O-phospho-L-seryl-[protein] + ADP + H(+). It carries out the reaction L-threonyl-[protein] + ATP = O-phospho-L-threonyl-[protein] + ADP + H(+). In terms of biological role, serine/threonine-protein kinase that acts like an antiapoptotic protein that counters TRAIL/TNFSF10-induced apoptosis by inducing phosphorylation of BIRC5 at 'Thr-34'. This chain is Cyclin-dependent kinase 15 (CDK15), found in Homo sapiens (Human).